The following is a 647-amino-acid chain: Neutral endopeptidase (647 aa).

Residues 1–647 form the Peptidase M13 domain; that stretch reads MRRYLAVRGG…LDPEDRITIW (647 aa). His-496 provides a ligand contact to Zn(2+). Glu-497 is a catalytic residue. Positions 500 and 556 each coordinate Zn(2+). Residue Asp-560 is the Proton donor of the active site.

It belongs to the peptidase M13 family. Zn(2+) is required as a cofactor.

The protein is Neutral endopeptidase (pepO) of Lactobacillus helveticus (Lactobacillus suntoryeus).